Reading from the N-terminus, the 355-residue chain is 3-dehydroquinate synthase (355 aa).

NAD(+)-binding positions include 71 to 76 (EGEERK), 105 to 109 (GVVGD), 129 to 130 (TS), lysine 142, and lysine 151. The Zn(2+) site is built by glutamate 184, histidine 246, and histidine 263.

Belongs to the sugar phosphate cyclases superfamily. Dehydroquinate synthase family. Co(2+) serves as cofactor. Requires Zn(2+) as cofactor. The cofactor is NAD(+).

Its subcellular location is the cytoplasm. It carries out the reaction 7-phospho-2-dehydro-3-deoxy-D-arabino-heptonate = 3-dehydroquinate + phosphate. It participates in metabolic intermediate biosynthesis; chorismate biosynthesis; chorismate from D-erythrose 4-phosphate and phosphoenolpyruvate: step 2/7. Functionally, catalyzes the conversion of 3-deoxy-D-arabino-heptulosonate 7-phosphate (DAHP) to dehydroquinate (DHQ). This chain is 3-dehydroquinate synthase, found in Streptococcus pneumoniae (strain Hungary19A-6).